Consider the following 368-residue polypeptide: Putative flavoprotein monooxygenase (368 aa).

Residues Ala-14, Glu-34, Ser-41, Ile-52–Thr-53, Val-110, Ala-307, and Ile-319 each bind FAD.

FAD is required as a cofactor.

Its function is as follows. FAD-binding protein that may have monooxygenase activity using NADPH and/or NADH as an electron donor. The protein is Putative flavoprotein monooxygenase of Staphylococcus aureus (strain Mu50 / ATCC 700699).